The primary structure comprises 361 residues: Protein C42 (361 aa).

The segment at 32–36 is LXCXE motif; it reads LLCDE. The short motif at 357 to 360 is the Nuclear localization signal element; sequence KRKK.

This sequence belongs to the baculoviridae C42 protein family. In terms of assembly, forms a complex with proteins E27 and p78/83. The interaction with p78/83 mediates nuclear translocation of P78/83. Interacts with protein Ac102. Interacts with IE0.

The protein localises to the host nucleus. It is found in the virion. Plays a role in host nuclear actin polymerization by recruiting p78/73 protein that is capable of activating an actin-related protein 2/3 complex to initiate nuclear actin polymerization. This is Protein C42 from Lepidoptera (butterflies and moths).